Here is a 77-residue protein sequence, read N- to C-terminus: Large ribosomal subunit protein bL31 (77 aa).

This sequence belongs to the bacterial ribosomal protein bL31 family. Type A subfamily. In terms of assembly, part of the 50S ribosomal subunit.

In terms of biological role, binds the 23S rRNA. The sequence is that of Large ribosomal subunit protein bL31 from Paramagnetospirillum magneticum (strain ATCC 700264 / AMB-1) (Magnetospirillum magneticum).